Reading from the N-terminus, the 204-residue chain is Protein GrpE (204 aa).

A compositionally biased stretch (basic and acidic residues) spans 1–12; that stretch reads MSNEEQAQKDDA. Residues 1–32 form a disordered region; that stretch reads MSNEEQAQKDDAQPVNEAAIDATAEQADAEVE. Low complexity predominate over residues 17–26; sequence EAAIDATAEQ.

Belongs to the GrpE family. Homodimer.

The protein resides in the cytoplasm. Participates actively in the response to hyperosmotic and heat shock by preventing the aggregation of stress-denatured proteins, in association with DnaK and GrpE. It is the nucleotide exchange factor for DnaK and may function as a thermosensor. Unfolded proteins bind initially to DnaJ; upon interaction with the DnaJ-bound protein, DnaK hydrolyzes its bound ATP, resulting in the formation of a stable complex. GrpE releases ADP from DnaK; ATP binding to DnaK triggers the release of the substrate protein, thus completing the reaction cycle. Several rounds of ATP-dependent interactions between DnaJ, DnaK and GrpE are required for fully efficient folding. This is Protein GrpE from Pseudoalteromonas atlantica (strain T6c / ATCC BAA-1087).